A 272-amino-acid polypeptide reads, in one-letter code: Undecaprenyl-diphosphatase (272 aa).

The next 8 membrane-spanning stretches (helical) occupy residues 5-25, 45-65, 88-108, 114-134, 153-172, 189-209, 221-241, and 251-271; these read YSLFVAFILGVVEGLTEFLPV, AKTFEVIIQLGSILAVVVVFW, HLTLGHILLAMIPAVILGLAF, ALFDPKSVMYALVAGGVLLLA, YRQAFAIGCFQCLALWPGFS, YAASEFSFILAVPMMIGASGL, GDLPMFAVGFITAFIVALIAI, and ISFVPFAIYRFIVAAVVYWVF.

This sequence belongs to the UppP family.

The protein localises to the cell inner membrane. The catalysed reaction is di-trans,octa-cis-undecaprenyl diphosphate + H2O = di-trans,octa-cis-undecaprenyl phosphate + phosphate + H(+). Catalyzes the dephosphorylation of undecaprenyl diphosphate (UPP). Confers resistance to bacitracin. In Yersinia pseudotuberculosis serotype IB (strain PB1/+), this protein is Undecaprenyl-diphosphatase.